We begin with the raw amino-acid sequence, 144 residues long: uncharacterized protein (144 aa).

Asparagine 14 and asparagine 15 each carry an N-linked (GlcNAc...) asparagine glycan. Residues 90–110 (FSWFIFGLFIACLLLCITLVL) form a helical membrane-spanning segment. The tract at residues 120–144 (NKATEVVPSSNIDDEEKQLSLSDMI) is disordered.

It localises to the membrane. This is an uncharacterized protein from Saccharomyces cerevisiae (strain ATCC 204508 / S288c) (Baker's yeast).